The primary structure comprises 93 residues: Small ribosomal subunit protein uS19c (93 aa).

It belongs to the universal ribosomal protein uS19 family.

It is found in the plastid. The protein localises to the chloroplast. Its function is as follows. Protein S19 forms a complex with S13 that binds strongly to the 16S ribosomal RNA. The chain is Small ribosomal subunit protein uS19c (rps19-A) from Zea mays (Maize).